The sequence spans 470 residues: Glutamate--tRNA ligase 1 (470 aa).

The short motif at 8–18 (PSPTGYLHVGG) is the 'HIGH' region element. The short motif at 250–254 (KLSKR) is the 'KMSKS' region element. An ATP-binding site is contributed by lysine 253.

It belongs to the class-I aminoacyl-tRNA synthetase family. Glutamate--tRNA ligase type 1 subfamily. Monomer.

The protein localises to the cytoplasm. It catalyses the reaction tRNA(Glu) + L-glutamate + ATP = L-glutamyl-tRNA(Glu) + AMP + diphosphate. Catalyzes the attachment of glutamate to tRNA(Glu) in a two-step reaction: glutamate is first activated by ATP to form Glu-AMP and then transferred to the acceptor end of tRNA(Glu). This is Glutamate--tRNA ligase 1 from Pseudothermotoga lettingae (strain ATCC BAA-301 / DSM 14385 / NBRC 107922 / TMO) (Thermotoga lettingae).